Consider the following 96-residue polypeptide: Co-chaperonin GroES (96 aa).

This sequence belongs to the GroES chaperonin family. Heptamer of 7 subunits arranged in a ring. Interacts with the chaperonin GroEL.

It localises to the cytoplasm. Together with the chaperonin GroEL, plays an essential role in assisting protein folding. The GroEL-GroES system forms a nano-cage that allows encapsulation of the non-native substrate proteins and provides a physical environment optimized to promote and accelerate protein folding. GroES binds to the apical surface of the GroEL ring, thereby capping the opening of the GroEL channel. This Wolbachia pipientis wMel protein is Co-chaperonin GroES.